Here is a 115-residue protein sequence, read N- to C-terminus: Large ribosomal subunit protein bL20 (115 aa).

It belongs to the bacterial ribosomal protein bL20 family.

Binds directly to 23S ribosomal RNA and is necessary for the in vitro assembly process of the 50S ribosomal subunit. It is not involved in the protein synthesizing functions of that subunit. The protein is Large ribosomal subunit protein bL20 of Prochlorococcus marinus (strain MIT 9515).